Reading from the N-terminus, the 750-residue chain is MIMETESPLSITSPSPSDSTFQVDMEKTMHALPSSLLDSPLLSTNEHYPPKSTLLLSGPSPIRNIQLSATKSSESNSIDYLTDTQNIFPNFVNNENNYQFSTAPLNPIDACRVGERKVFTTGNVLLSADRQPLSTWQQNISVLSESPPQNGIQSYISSSEQAAQALTRKPSVTGFRSSSLNSNSDDIDIFSHASRYLFVTNLPRIVPYATLLELFSKLGDVKGIDTSSLSTDGICIVAFFDIRQAIQAAKSLRSQRFFNDRLLYFQFCQRSSIQKMINQGATIQFLDDNEGQLLLNMQGGSVLSILQLQSILQTFGPLLIMKPLRSQNVSQIICEFYDTRDASFALDELDGRIIHNCCLQVAYYDAMADSVSTSSASSLSVPRGFSGMLNNNSEWNNSMTMSSNQETPTAASCAVSRIGSSYGMSNNFGSVPLGRTESSPAWGTSGYYDVSSTSPVAPSDRNPSRQYNSIRYGLDVNPIAPPNSSRLKQRNSDLLNGINPQWSPFSSNTGKVFDSPTGSLGMRRSLTVGANASCSNPTNLSFASLTLHDSKADSTLSASSLNPDLNLQRYTPTVEKHASDRNSVDYAQIASGIDTRTTVMIKNIPNKFTQQMLRDYIDVTNKGTYDFLYLRIDFVNKCNVGYAFINFIEPQSIITFGKARVGTQWNVFHSEKICDISYANIQGKDRLIEKFRNSCVMDENPAYRPKIFVSHGPNRGMEEPFPAPNNARRKLRSIASAQQIGLFPPTASKC.

Positions 1-20 are disordered; sequence MIMETESPLSITSPSPSDST. Positions 7–20 are enriched in polar residues; sequence SPLSITSPSPSDST. RRM domains are found at residues 195 to 270 and 293 to 361; these read RYLF…FCQR and LLLN…CLQV.

In terms of assembly, binds rad24 when phosphorylated. Post-translationally, inactivated by phosphorylation by ran1/pat1.

Its function is as follows. Crucial for commitment to meiosis but it is not sufficient itself for the commitment. May be a splicing regulator. This is Meiosis protein mei2 (mei2) from Schizosaccharomyces pombe (strain 972 / ATCC 24843) (Fission yeast).